The primary structure comprises 248 residues: Probable phosphatase VS_II0429 (248 aa).

Zn(2+) contacts are provided by H8, H10, H16, H41, E74, H102, H132, D194, and H196.

This sequence belongs to the PHP family. It depends on Zn(2+) as a cofactor.

The sequence is that of Probable phosphatase VS_II0429 from Vibrio atlanticus (strain LGP32) (Vibrio splendidus (strain Mel32)).